A 499-amino-acid polypeptide reads, in one-letter code: uncharacterized protein (499 aa).

Disordered stretches follow at residues 76–118 and 208–268; these read QATA…RLSP and DFET…DWAN. Positions 87-104 are enriched in basic and acidic residues; the sequence is DPEKQTGKSRYHPSEEIR. Residues 208-263 show a composition bias toward acidic residues; it reads DFETEDDESGDDDSEDTGEDEDEEEWVAILEDEDEDDDDDDDDDEDDDDSDSDESL. Phosphoserine is present on S355. The interval 478–499 is disordered; it reads AEGQIRKLLFPKTNQSTQPKPK. The segment covering 489–499 has biased composition (polar residues); it reads KTNQSTQPKPK.

This is an uncharacterized protein from Arabidopsis thaliana (Mouse-ear cress).